Consider the following 295-residue polypeptide: Serpentine receptor class gamma-53 (295 aa).

A run of 6 helical transmembrane segments spans residues 7-27 (IWLC…VLLS), 39-61 (VITM…RMVF), 121-141 (FYLL…QLLY), 173-193 (CFMS…LYQV), 211-230 (MSLI…AWQT), and 241-261 (IELL…ILLI).

It belongs to the nematode receptor-like protein srg family.

It localises to the membrane. In Caenorhabditis elegans, this protein is Serpentine receptor class gamma-53 (srg-53).